Here is a 98-residue protein sequence, read N- to C-terminus: Integration host factor subunit alpha (98 aa).

The interval 49-71 (FGNFDLRDKNQRPGRNPKTGEDI) is disordered.

It belongs to the bacterial histone-like protein family. Heterodimer of an alpha and a beta chain.

This protein is one of the two subunits of integration host factor, a specific DNA-binding protein that functions in genetic recombination as well as in transcriptional and translational control. The protein is Integration host factor subunit alpha of Shewanella amazonensis (strain ATCC BAA-1098 / SB2B).